A 927-amino-acid chain; its full sequence is Bifunctional glutamine synthetase adenylyltransferase/adenylyl-removing enzyme (927 aa).

The segment at 1 to 428 (MTMTDASDLL…AQFDQVFADK (428 aa)) is adenylyl removase. The interval 438–927 (DQAAGCIWSG…AALWARVFGA (490 aa)) is adenylyl transferase.

This sequence belongs to the GlnE family. Requires Mg(2+) as cofactor.

The catalysed reaction is [glutamine synthetase]-O(4)-(5'-adenylyl)-L-tyrosine + phosphate = [glutamine synthetase]-L-tyrosine + ADP. It catalyses the reaction [glutamine synthetase]-L-tyrosine + ATP = [glutamine synthetase]-O(4)-(5'-adenylyl)-L-tyrosine + diphosphate. Functionally, involved in the regulation of glutamine synthetase GlnA, a key enzyme in the process to assimilate ammonia. When cellular nitrogen levels are high, the C-terminal adenylyl transferase (AT) inactivates GlnA by covalent transfer of an adenylyl group from ATP to specific tyrosine residue of GlnA, thus reducing its activity. Conversely, when nitrogen levels are low, the N-terminal adenylyl removase (AR) activates GlnA by removing the adenylyl group by phosphorolysis, increasing its activity. The regulatory region of GlnE binds the signal transduction protein PII (GlnB) which indicates the nitrogen status of the cell. The chain is Bifunctional glutamine synthetase adenylyltransferase/adenylyl-removing enzyme from Burkholderia pseudomallei (strain K96243).